Consider the following 117-residue polypeptide: Large ribosomal subunit protein bL20c (117 aa).

The protein belongs to the bacterial ribosomal protein bL20 family.

The protein resides in the plastid. The protein localises to the chloroplast. Functionally, binds directly to 23S ribosomal RNA and is necessary for the in vitro assembly process of the 50S ribosomal subunit. It is not involved in the protein synthesizing functions of that subunit. This Acorus gramineus (Dwarf sweet flag) protein is Large ribosomal subunit protein bL20c.